Consider the following 285-residue polypeptide: UstYa family oxidase phomYe (285 aa).

A helical membrane pass occupies residues 32 to 54 (LFYGWKGIAFLSTLTNVLFISGF). The interval 143-165 (YGFGTPLTGPGSEGNEHDPTPWT) is disordered. Positions 177–181 (HQLHC) match the HXXHC 1 motif. Residue Asn-202 is glycosylated (N-linked (GlcNAc...) asparagine). The HXXHC 2 signature appears at 209-213 (HVDHC).

The protein belongs to the ustYa family.

Its subcellular location is the membrane. It participates in mycotoxin biosynthesis. In terms of biological role, ustYa family oxidase; part of the gene cluster that mediates the biosynthesis of the phomopsins, a group of hexapeptide mycotoxins which infects lupins and causes lupinosis disease in livestock. Within the pathway, phomYe catalyzes the desaturation of the Pro moiety into 3,4-dehydroproline (dPro). The pathway starts with the processing of the precursor phomA by several endopeptidases including kexin proteases as well as the cluster-specific S41 family peptidase phomP1 and the oligopeptidase phomG to produce 10 identical copies of the hexapeptide Tyr-Val-Ile-Pro-Ile-Asp. After being excised from the precursor peptide, the core peptides are cyclized and modified post-translationally by enzymes encoded within the gene cluster. The timing and order of proteolysis of the phomA precursor and PTMs are still unknown. Two tyrosinase-like enzymes, phomQ1 and phomQ2, catalyze the chlorination and hydroxylation of Tyr, respectively. PhomYb, is proposed to be involved in the construction of the macrocyclic structure. The other 4 ustYa family proteins may be involved in PTMs that generate the unique structure of phomopsin A. PhomYa is required for the hydroxylation of C-beta of Tyr. PhomYc, phomYd, and phomYe are responsible for the biosynthesis of 2,3-dehydroisoleucine (dIle), 2,3-dehydroaspartic acid (dAsp), and 3,4-dehydroproline (dPro), respectively. While dIle formation by phomYc is indispensable for the installation of dAsp by phomYd, the order of the other PTMs have not been elucidated yet. Most of the biosynthetic enzymes likely have broad substrate specificity, and thus, there might be a metabolic grid from a precursor to phomopsin A. The enzyme(s) responsible for the biosynthesis of 3,4-dehydrovaline (dVal) have also not been identified yet. Finally, phomM acts as an S-adenosylmethionine-dependent alpha-N-methyltransferase that catalyzes two successive N-methylation reactions, converting N-desmethyl-phomopsin A to phomopsin A and phomopsin A further to an N,N-dimethylated congener called phomopsin E. In Diaporthe leptostromiformis (Lupinosis disease fungus), this protein is UstYa family oxidase phomYe.